Reading from the N-terminus, the 620-residue chain is Zinc metalloproteinase-disintegrin-like ACLD (620 aa).

Residues 1–20 form the signal peptide; sequence MIQVLLVTLCLAVFPYQGSS. Residues 21–189 constitute a propeptide that is removed on maturation; sequence IILESGNVND…KKASQLNLTP (169 aa). Residues 199–395 enclose the Peptidase M12B domain; the sequence is KYVEFVVVLD…RRPKCILNEP (197 aa). Glu202 is a Ca(2+) binding site. N-linked (GlcNAc...) asparagine glycosylation is found at Asn259 and Asn265. Asp286 is a binding site for Ca(2+). Cystine bridges form between Cys310–Cys390, Cys350–Cys374, and Cys352–Cys357. His335 contacts Zn(2+). The active site involves Glu336. 2 residues coordinate Zn(2+): His339 and His345. Asn373 carries N-linked (GlcNAc...) asparagine glycosylation. The Ca(2+) site is built by Cys390 and Asn393. An N-linked (GlcNAc...) asparagine glycan is attached at Asn396. The Disintegrin domain maps to 403–489; it reads PPVCGNELLE…ECPTDRFQRN (87 aa). Positions 405, 408, 410, 412, 415, and 418 each coordinate Ca(2+). Intrachain disulfides connect Cys406–Cys435, Cys417–Cys430, Cys419–Cys425, Cys429–Cys452, Cys443–Cys449, Cys448–Cys474, Cys461–Cys481, Cys468–Cys500, Cys493–Cys505, Cys512–Cys562, Cys527–Cys573, Cys540–Cys550, Cys557–Cys599, and Cys593–Cys604. Residues 467 to 469 carry the D/ECD-tripeptide motif; that stretch reads DCD. N-linked (GlcNAc...) asparagine glycosylation is found at Asn502 and Asn536.

The protein belongs to the venom metalloproteinase (M12B) family. P-III subfamily. P-IIIa sub-subfamily. As to quaternary structure, monomer. It depends on Zn(2+) as a cofactor. In terms of tissue distribution, expressed by the venom gland.

The protein localises to the secreted. Its activity is regulated as follows. Inhibited by EDTA and O-phenanthroline. Not inhibited by PMSF, benzamidine, irreversible serine-proteinase inhibitors and cysteine proteinase inhibitor E-64. Functionally, is a potent activator of prothrombin (F2). Does not elicit any hemorrhagic response. Barely inhibits collagen-induced platelet aggregation. Binds neither collagen, nor the jararhagin-monoclonal antibody MAJar3. Hydrolyzes the Aalpha-chain of fibrin and fibrinogen, without affecting the Bbeta- and gamma-chains. Is capable of triggering endothelial pro-inflammatory and procoagulant cell responses, but fails to trigger apoptosis. Induces von Willebrand factor release, and the expression of both ICAM1 and E-selectin (SELE) (without increase in VCAM1) in endothelial cells (HUVEC). Is also able to up-regulate the synthesis of the coagulation factor TF (F3). Enhances nitric oxide (NO) generation, prostacyclin production and interleukin-8 release. The polypeptide is Zinc metalloproteinase-disintegrin-like ACLD (Agkistrodon contortrix laticinctus (Broad-banded copperhead)).